The chain runs to 199 residues: Charged multivesicular body protein 1b (199 aa).

Coiled-coil stretches lie at residues 10-48 and 178-199; these read NLKF…MEVA and TSVA…RDQV. The segment at 167–199 is disordered; the sequence is ELPQGQTGSVGTSVASAEQDELSQRLARLRDQV. Polar residues predominate over residues 170–182; that stretch reads QGQTGSVGTSVAS. The short motif at 186-196 is the MIT-interacting motif element; the sequence is DELSQRLARLR.

Belongs to the SNF7 family. As to quaternary structure, probable peripherally associated component of the endosomal sorting required for transport complex III (ESCRT-III).

It localises to the cytoplasm. The protein localises to the cytosol. Its subcellular location is the endosome. The protein resides in the late endosome membrane. Functionally, probable peripherally associated component of the endosomal sorting required for transport complex III (ESCRT-III) which is involved in multivesicular bodies (MVBs) formation and sorting of endosomal cargo proteins into MVBs. MVBs contain intraluminal vesicles (ILVs) that are generated by invagination and scission from the limiting membrane of the endosome and mostly are delivered to lysosomes enabling degradation of membrane proteins, such as stimulated growth factor receptors, lysosomal enzymes and lipids. This is Charged multivesicular body protein 1b (CHMP1B) from Gallus gallus (Chicken).